We begin with the raw amino-acid sequence, 804 residues long: MSLETSTTTPAGSPLSDRELDLIDKYWRAANYLSVGQIYLLDNPLLKEPLSAEHVKPRLLGHWGTTPGLNLVYAHLNRIIRNRDADVIYVTGPGHGGPGLVANAYLEGTYSEVYTGIEEDAEGLRKLFRQFSFPGGIPSHVAAQTPGSIHEGGELGYALVHAYGAAFDNPYLVVACVIGDGEAETGPLAAGWHSNKFLNPVTDGAVLPILALNGYKIANPTVLARIPHTELEALLRGYGYRPITVAGDDPTDVHRQLAAALDEAFDGIAAIQGAARGGGEVQRPVWPMIVLRTPKGWTGPKVVDGKRVEGTWRSHQVPLAETHDNPEHRAQLEEWLRSYGPEQLFDDDGRLRAELRALAPTGDRRMSANPHANGGLLLHDLDLPDFRDYAVPVSRPGSVTHEATRVLGTFLRDVIARNKDRFRMMGPDETASNRLDAVYGATEKVWLSATEPDDEHLAPDGRVMEVLSEHLCQGWLEGYLLTGRHGLFNCYEAFVHIVDSMLNQHAKWLATSRELPWRRPIASLNYLLTSHVWRQDHNGASHQDPGFIDLVANKRAELTRVYLPPDGNTLLSVADHCLRSRDYINVIVAGKQPALAYLDMDAAIAHCTRGLGIWDWASTARSIGAEPDVVLACAGDIPTLETLAAADILRRELPDLAVRVVNVVDLMRLQPDSEHPHGLPDREFDALFTRDRPVIFAYHGYPWLIHRLTYRRANHAQLHVRGFKERGTTTTPFDMVMLNDLDRFHLVIDVLDRVEGLASRAAMLRQRMVDARLAARMYTREHGEDDPAIANWTWEPSERNSRSE.

Belongs to the XFP family. The cofactor is thiamine diphosphate.

This chain is Probable phosphoketolase, found in Mycolicibacterium paratuberculosis (strain ATCC BAA-968 / K-10) (Mycobacterium paratuberculosis).